The sequence spans 287 residues: 4-diphosphocytidyl-2-C-methyl-D-erythritol kinase (287 aa).

Lys-12 is a catalytic residue. An ATP-binding site is contributed by 97–107 (PMGGGLGGGSS). Residue Asp-139 is part of the active site.

Belongs to the GHMP kinase family. IspE subfamily.

It catalyses the reaction 4-CDP-2-C-methyl-D-erythritol + ATP = 4-CDP-2-C-methyl-D-erythritol 2-phosphate + ADP + H(+). Its pathway is isoprenoid biosynthesis; isopentenyl diphosphate biosynthesis via DXP pathway; isopentenyl diphosphate from 1-deoxy-D-xylulose 5-phosphate: step 3/6. Its function is as follows. Catalyzes the phosphorylation of the position 2 hydroxy group of 4-diphosphocytidyl-2C-methyl-D-erythritol. The protein is 4-diphosphocytidyl-2-C-methyl-D-erythritol kinase of Marinobacter nauticus (strain ATCC 700491 / DSM 11845 / VT8) (Marinobacter aquaeolei).